The primary structure comprises 365 residues: UBX domain-containing protein 2B (365 aa).

Positions 1–97 (MADGGASPAQ…MSDDKENQRF (97 aa)) are disordered. 2 stretches are compositionally biased toward basic and acidic residues: residues 50 to 63 (DEAKRQSLRSDKPT) and 73 to 95 (LKIDSFRSLRKPERSMSDDKENQ). Residues 175–240 (DVQILLKLWR…MEDHQEQEYV (66 aa)) form the SEP domain. Residues 286–363 (DSVPATKIQI…DILNTVILQQ (78 aa)) form the UBX domain.

This sequence belongs to the NSFL1C family.

It is found in the nucleus. It localises to the cytoplasm. The protein localises to the cytosol. Its subcellular location is the endoplasmic reticulum. The protein resides in the golgi apparatus. It is found in the cytoskeleton. It localises to the microtubule organizing center. The protein localises to the centrosome. Functionally, adapter protein required for Golgi and endoplasmic reticulum biogenesis. Involved in Golgi and endoplasmic reticulum maintenance during interphase and in their reassembly at the end of mitosis. Regulates the centrosomal levels of kinase AURKA/Aurora A during mitotic progression by promoting AURKA removal from centrosomes in prophase. Also, regulates spindle orientation during mitosis. This chain is UBX domain-containing protein 2B (UBXN2B), found in Gallus gallus (Chicken).